The sequence spans 223 residues: UPF0441 protein YgiB (223 aa).

Residues 201–223 are disordered; the sequence is ESVAKQSAMQRSAAGTSTRSMGG. The segment covering 204-223 has biased composition (polar residues); sequence AKQSAMQRSAAGTSTRSMGG.

Belongs to the UPF0441 family.

In Salmonella arizonae (strain ATCC BAA-731 / CDC346-86 / RSK2980), this protein is UPF0441 protein YgiB.